We begin with the raw amino-acid sequence, 253 residues long: Eukaryotic initiation factor 4A-6 (253 aa).

Positions 1–82 (HVVVGTPGRV…RKFMNKPVRI (82 aa)) constitute a Helicase ATP-binding domain. The DEAD box signature appears at 30 to 33 (DEAD). Residues 93–253 (GIKQFYVNVD…EELPANVADL (161 aa)) enclose the Helicase C-terminal domain.

This sequence belongs to the DEAD box helicase family. eIF4A subfamily. EIF4F is a multi-subunit complex, the composition of which varies with external and internal environmental conditions. It is composed of at least EIF4A, EIF4E and EIF4G.

It catalyses the reaction ATP + H2O = ADP + phosphate + H(+). In terms of biological role, ATP-dependent RNA helicase which is a subunit of the eIF4F complex involved in cap recognition and is required for mRNA binding to ribosome. In the current model of translation initiation, eIF4A unwinds RNA secondary structures in the 5'-UTR of mRNAs which is necessary to allow efficient binding of the small ribosomal subunit, and subsequent scanning for the initiator codon. In Nicotiana tabacum (Common tobacco), this protein is Eukaryotic initiation factor 4A-6.